Here is a 345-residue protein sequence, read N- to C-terminus: Dihydroorotate dehydrogenase (quinone) (345 aa).

Residues 65–69 (AGLDK) and Thr-89 each bind FMN. Position 69 (Lys-69) interacts with substrate. Residue 114-118 (NRMGF) participates in substrate binding. Residues Asn-142 and Asn-175 each coordinate FMN. Asn-175 provides a ligand contact to substrate. Ser-178 (nucleophile) is an active-site residue. A substrate-binding site is contributed by Asn-180. FMN contacts are provided by Lys-220 and Thr-248. Substrate is bound at residue 249–250 (NT). Residues Gly-271, Gly-300, and 321–322 (YT) each bind FMN.

The protein belongs to the dihydroorotate dehydrogenase family. Type 2 subfamily. In terms of assembly, monomer. It depends on FMN as a cofactor.

The protein resides in the cell membrane. It catalyses the reaction (S)-dihydroorotate + a quinone = orotate + a quinol. It functions in the pathway pyrimidine metabolism; UMP biosynthesis via de novo pathway; orotate from (S)-dihydroorotate (quinone route): step 1/1. In terms of biological role, catalyzes the conversion of dihydroorotate to orotate with quinone as electron acceptor. The protein is Dihydroorotate dehydrogenase (quinone) of Burkholderia lata (strain ATCC 17760 / DSM 23089 / LMG 22485 / NCIMB 9086 / R18194 / 383).